A 158-amino-acid chain; its full sequence is MSLFDGKKVIIIGDRDGIPGPAMEECLKGTGAEVVYSSTECFVUTAAGAMDLENQKRVMDLTEKHNAENVVVILGAAEAEAAGLAAETVTNGDPTFAGPLAGVQLGLRVYHAVEPQFKDAVNAEVYEDQIGMMEMVLEVDAIIEEMSNIRNEFGKFKD.

Residue Sec44 is part of the active site. A non-standard amino acid (selenocysteine) is located at residue Sec44.

Belongs to the GrdA family. Monomer. Component of the glycine, sarcosine and betaine reductase complexes, together with components B and C.

It carries out the reaction acetyl phosphate + [thioredoxin]-disulfide + NH4(+) + H2O = [thioredoxin]-dithiol + glycine + phosphate + H(+). The catalysed reaction is acetyl phosphate + methylamine + [thioredoxin]-disulfide + H2O = sarcosine + [thioredoxin]-dithiol + phosphate + H(+). It catalyses the reaction acetyl phosphate + trimethylamine + [thioredoxin]-disulfide + H2O = glycine betaine + [thioredoxin]-dithiol + phosphate + H(+). In terms of biological role, in the first step of glycine, betaine and sarcosine reductases, the substrate is bound to component PB via a Schiff base intermediate. Then the PB-activated substrate is nucleophilically attacked by the selenol anion of component PA to transform it to a carboxymethylated selenoether and the respective amine. By action of component PC, acetyl phosphate is formed, leaving component PA in its oxidized state. Finally component PA becomes reduced by the thioredoxin system to start a new catalytic cycle of reductive deamination. In Alkaliphilus metalliredigens (strain QYMF), this protein is Glycine/sarcosine/betaine reductase complex component A.